Consider the following 356-residue polypeptide: Guanine nucleotide-binding protein alpha-3 subunit (356 aa).

Positions 1–26 (MGACMSKNDEETEQKKRSQKIDRDLE) are disordered. Gly2 carries the N-myristoyl glycine lipid modification. Cys4 is lipidated: S-palmitoyl cysteine. Basic and acidic residues predominate over residues 7-23 (KNDEETEQKKRSQKIDR). The 323-residue stretch at 34–356 (KECKILLLGS…NNALKDSGIL (323 aa)) folds into the G-alpha domain. The tract at residues 37–50 (KILLLGSGESGKST) is G1 motif. GTP is bound by residues 42–49 (GSGESGKS), 179–185 (LRARTKT), 204–208 (DVGGQ), 273–276 (NKVD), and Ala328. Positions 49 and 185 each coordinate Mg(2+). The interval 177–185 (DVLRARTKT) is G2 motif. Residues 200–209 (IHMFDVGGQR) are G3 motif. The interval 269 to 276 (ILFLNKVD) is G4 motif. The G5 motif stretch occupies residues 326–331 (TQATDT).

This sequence belongs to the G-alpha family. G(q) subfamily. G proteins are composed of 3 units; alpha, beta and gamma. The alpha chain contains the guanine nucleotide binding site.

Functionally, guanine nucleotide-binding proteins (G proteins) are involved as modulators or transducers in various transmembrane signaling systems. Involved in conidiation. This is Guanine nucleotide-binding protein alpha-3 subunit (gna-3) from Neurospora crassa (strain ATCC 24698 / 74-OR23-1A / CBS 708.71 / DSM 1257 / FGSC 987).